Consider the following 917-residue polypeptide: Thiamine biosynthesis bifunctional protein ThiEC (917 aa).

Residues 1–243 (MSNEYPYASM…EGWKAVRGDK (243 aa)) are thiamine-phosphate synthase. Residues 48–52 (QLRAK) and D84 contribute to the 4-amino-2-methyl-5-(diphosphooxymethyl)pyrimidine site. Mg(2+)-binding residues include D85 and D109. 4-amino-2-methyl-5-(diphosphooxymethyl)pyrimidine is bound at residue S128. Position 157–159 (157–159 (STT)) interacts with 2-[(2R,5Z)-2-carboxy-4-methylthiazol-5(2H)-ylidene]ethyl phosphate. K160 provides a ligand contact to 4-amino-2-methyl-5-(diphosphooxymethyl)pyrimidine. 2-[(2R,5Z)-2-carboxy-4-methylthiazol-5(2H)-ylidene]ethyl phosphate contacts are provided by residues G196 and 216–217 (VS). The segment at 256 to 311 (PATDTQAAQEGAAKPGSEATEKKFTNAKDAKDAQKLAKQQRVDIAARGSKQRDKAH) is disordered. Residues 271–917 (GSEATEKKFT…GGKLYSTAQE (647 aa)) are phosphomethylpyrimidine synthase. The span at 274–290 (ATEKKFTNAKDAKDAQK) shows a compositional bias: basic and acidic residues. 5-amino-1-(5-phospho-beta-D-ribosyl)imidazole-binding positions include N487, M516, Y545, H581, 601–603 (SRG), 642–645 (DGLR), and E681. H685 is a Zn(2+) binding site. Y708 serves as a coordination point for 5-amino-1-(5-phospho-beta-D-ribosyl)imidazole. H749 is a Zn(2+) binding site. C829, C832, and C837 together coordinate [4Fe-4S] cluster.

The protein in the N-terminal section; belongs to the thiamine-phosphate synthase family. It in the C-terminal section; belongs to the ThiC family. Requires [4Fe-4S] cluster as cofactor.

It catalyses the reaction 2-[(2R,5Z)-2-carboxy-4-methylthiazol-5(2H)-ylidene]ethyl phosphate + 4-amino-2-methyl-5-(diphosphooxymethyl)pyrimidine + 2 H(+) = thiamine phosphate + CO2 + diphosphate. The catalysed reaction is 2-(2-carboxy-4-methylthiazol-5-yl)ethyl phosphate + 4-amino-2-methyl-5-(diphosphooxymethyl)pyrimidine + 2 H(+) = thiamine phosphate + CO2 + diphosphate. The enzyme catalyses 4-methyl-5-(2-phosphooxyethyl)-thiazole + 4-amino-2-methyl-5-(diphosphooxymethyl)pyrimidine + H(+) = thiamine phosphate + diphosphate. It carries out the reaction 5-amino-1-(5-phospho-beta-D-ribosyl)imidazole + S-adenosyl-L-methionine = 4-amino-2-methyl-5-(phosphooxymethyl)pyrimidine + CO + 5'-deoxyadenosine + formate + L-methionine + 3 H(+). It participates in cofactor biosynthesis; thiamine diphosphate biosynthesis; thiamine phosphate from 4-amino-2-methyl-5-diphosphomethylpyrimidine and 4-methyl-5-(2-phosphoethyl)-thiazole: step 1/1. In terms of biological role, condenses 4-methyl-5-(beta-hydroxyethyl)thiazole monophosphate (THZ-P) and 2-methyl-4-amino-5-hydroxymethyl pyrimidine pyrophosphate (HMP-PP) to form thiamine monophosphate (TMP). Catalyzes the synthesis of the hydroxymethylpyrimidine phosphate (HMP-P) moiety of thiamine from aminoimidazole ribotide (AIR) in a radical S-adenosyl-L-methionine (SAM)-dependent reaction. This Bifidobacterium longum (strain NCC 2705) protein is Thiamine biosynthesis bifunctional protein ThiEC (thiE/thiC).